We begin with the raw amino-acid sequence, 211 residues long: Beta-crystallin B3 (211 aa).

An N-acetylmethionine modification is found at Met-1. Position 2 is an N-acetylalanine; in Beta-crystallin B3, N-terminally processed (Ala-2). The segment at 2-23 (AEQHGAPEQAAAGKSHGGLGGS) is N-terminal arm. 2 consecutive Beta/gamma crystallin 'Greek key' domains span residues 24–63 (YKVT…QVES) and 64–108 (GPWL…RPLH). The connecting peptide stretch occupies residues 109-113 (IDGPD). Beta/gamma crystallin 'Greek key' domains lie at 114–155 (HKLH…RVIN) and 156–198 (GTWV…RRIR). The C-terminal arm stretch occupies residues 200–211 (QKWHKRGCFLSS).

Belongs to the beta/gamma-crystallin family. As to quaternary structure, homo/heterodimer, or complexes of higher-order. The structure of beta-crystallin oligomers seems to be stabilized through interactions between the N-terminal arms.

Functionally, crystallins are the dominant structural components of the vertebrate eye lens. The protein is Beta-crystallin B3 (Crybb3) of Mus musculus (Mouse).